The following is a 377-amino-acid chain: Guanine nucleotide-binding protein subunit beta-1 (377 aa).

WD repeat units lie at residues 63–93 (GHTG…IVWN), 105–135 (LPCA…SIFN), 154–185 (GHKG…VLWD), 202–233 (GHTA…RLWD), 246–276 (GHEG…RLFD), 293–323 (GDIP…YVWD), and 339–369 (SHEG…KIWA).

Belongs to the WD repeat G protein beta family. G proteins are composed of 3 units, alpha, beta and gamma.

Functionally, guanine nucleotide-binding proteins (G proteins) are involved as a modulator or transducer in various transmembrane signaling systems. The beta and gamma chains are required for the GTPase activity, for replacement of GDP by GTP, and for G protein-effector interaction. This is Guanine nucleotide-binding protein subunit beta-1 from Nicotiana tabacum (Common tobacco).